Consider the following 22-residue polypeptide: thr operon leader peptide (22 aa).

Residues 1–22 (MRNISLTTTIITTTDTTGNGAG) form a disordered region. Low complexity predominate over residues 7 to 22 (TTTIITTTDTTGNGAG).

It belongs to the thr operon leader peptide family.

Functionally, this protein is involved in control of the biosynthesis of threonine. The sequence is that of thr operon leader peptide from Serratia marcescens.